Reading from the N-terminus, the 467-residue chain is Ergochrome gene cluster transcriptional coactivator CPUR_05432 (467 aa).

Residues 109–179 (IAIQCEMLGS…RRGYVAHTPL (71 aa)) form the HTH iclR-type domain. Positions 139 to 158 (IQDVANLSNVPEQQLAQMIG) form a DNA-binding region, H-T-H motif.

The protein resides in the nucleus. Transcriptional coactivator; part of the gene cluster responsible for the typical purple-black color of the ergot sclerotia. The ergochrome gene cluster produces several ergot pigments including the yellow ergochrome secalonic acid and its derivatives, as well as the red anthraquinones endocrocin and clavorubin. With CPUR_05433, coregulates the production of geodin. In Claviceps purpurea (strain 20.1) (Ergot fungus), this protein is Ergochrome gene cluster transcriptional coactivator CPUR_05432.